Reading from the N-terminus, the 224-residue chain is Ethylene-inducing xylanase 5 (224 aa).

Residues 1 to 16 (MLKSLVVLLLTSRVIA) form the signal peptide. The GH11 domain occupies 32–218 (QATPNSQGTH…SSGFAEMTVA (187 aa)). N88 is a glycosylation site (N-linked (GlcNAc...) asparagine). The Nucleophile role is filled by E117. E205 acts as the Proton donor in catalysis.

This sequence belongs to the glycosyl hydrolase 11 (cellulase G) family.

It catalyses the reaction Endohydrolysis of (1-&gt;4)-beta-D-xylosidic linkages in xylans.. The protein operates within glycan degradation; xylan degradation. In terms of biological role, endo-1,4-beta-xylanase involved in the hydrolysis of xylan, a major structural heterogeneous polysaccharide found in plant biomass representing the second most abundant polysaccharide in the biosphere, after cellulose. May act as an elicitor of plant defense responses in certain plants but does not exhibit any cell death when transiently expressed in N.benthamiana. In Verticillium dahliae (strain VdLs.17 / ATCC MYA-4575 / FGSC 10137) (Verticillium wilt), this protein is Ethylene-inducing xylanase 5.